The primary structure comprises 570 residues: MALGARGWRRRSLLLLLLWVTGQAAPVLGLAVSSELQIQQSFVPDECPRTVHSGDFVRYHYVGTFLDGQKFDSSYDRDSTFNVFVGKGQLIAGMDQALVGMCVNERRLVTIPPNLAYGSEGVSGVIPPNSVLHFDVLLVDIWNSEDQVHIQTYFKPPSCPRTIQVSDFVRYHYNGTFLDGTLFDSSHNRMKTYDTYVGIGWLIPGMDKGLLGMCVGEKRIITVPPFLAYGEEGDGKDIPGQASLVFDVALLDLHNPKDTISIENKVVPENCERRSQSGDFLRYHYNGTLLDGTLFDSSYSRNHTFDTYIGQGYVIPGMDEGLLGVCIGERRRIVVPPHLGYGEKGRGSIPGSAVLVFDIHVIDFHNPSDSISITSHYKPPDCSVLSKKGDYLKYHYNASLLDGTLLDSTWNLGKTYNIVLGSGQVVLGMDMGLREMCVGEKRTVIIPPHLGYGEAGVDGEVPGSAVLVFDIELLELVSGLPEGYMFIWNGEVSPNLFEEIDRDGNGEVLLEEFSEYIHAQVATGKGKLAPGFNAEMIVKNMFTNQDRNGDGKVTAEEFKLKDQEAKHDEL.

The first 24 residues, 1 to 24 (MALGARGWRRRSLLLLLLWVTGQA), serve as a signal peptide directing secretion. PPIase FKBP-type domains lie at 54–142 (GDFV…VDIW), 166–254 (SDFV…LDLH), 278–365 (GDFL…IDFH), and 389–477 (GDYL…LELV). Asn-174, Asn-286, Asn-302, and Asn-397 each carry an N-linked (GlcNAc...) asparagine glycan. 2 EF-hand domains span residues 488-523 (WNGEVSPNLFEEIDRDGNGEVLLEEFSEYIHAQVAT) and 533-568 (NAEMIVKNMFTNQDRNGDGKVTAEEFKLKDQEAKHD). Residues Asp-501, Asp-503, Asn-505, Glu-507, Glu-512, Asp-546, Asn-548, Asp-550, Lys-552, and Glu-557 each coordinate Ca(2+). Positions 567–570 (HDEL) match the Prevents secretion from ER motif.

Phosphorylated. As to expression, predominantly expressed in heart, skeletal muscle, lung, liver and kidney. Lower levels found in brain, spleen and testis.

Its subcellular location is the endoplasmic reticulum lumen. The catalysed reaction is [protein]-peptidylproline (omega=180) = [protein]-peptidylproline (omega=0). With respect to regulation, inhibited by FK506. In terms of biological role, PPIases accelerate the folding of proteins during protein synthesis. The chain is Peptidyl-prolyl cis-trans isomerase FKBP9 (Fkbp9) from Mus musculus (Mouse).